The following is a 72-amino-acid chain: MAFLKKSLFLVLFLGLVSLSICEKEKRQNEEDEDENEAANHEEGSEEKRGLFDIVKKVVGAFGSLGKRNDLE.

A signal peptide spans methionine 1 to cysteine 22. Positions glutamate 23–arginine 49 are excised as a propeptide. Positions arginine 27 to glutamate 47 are disordered. Over residues alanine 38–glutamate 47 the composition is skewed to basic and acidic residues. At leucine 65 the chain carries Leucine amide. Residues asparagine 69–glutamate 72 constitute a propeptide that is removed on maturation.

It belongs to the frog skin active peptide (FSAP) family. Aurein subfamily. In terms of assembly, may be monomeric or may oligomerize as homodimers or homotrimers in Gram-positive and Gram-negative bacteria mimetic membranes. Post-translationally, C-terminal amidation enhances antibacterial activity. This increase may be due to stabilization of the alpha-helical structure at the membrane interface. In terms of tissue distribution, expressed by the skin dorsal glands.

It is found in the secreted. The protein localises to the target cell membrane. Amphipathic alpha-helical antimicrobial peptide with moderate to potent activity against Gram-positive bacteria, Gram-negative bacteria and fungi. Also shows a weak activity against biofilm of both Gram-positive and Gram-negative bacteria. Probably acts by disturbing membrane functions with its amphipathic structure. Kills fungi via membranolytic action. Enhanced sterol levels in lipid composition membranes reduce interaction of this peptide with membranes, having a protective effect against the lytic ability of the peptide. Shows anticancer activity. This is Aurein-2.5 from Ranoidea aurea (Green and golden bell frog).